A 351-amino-acid chain; its full sequence is Peptide chain release factor 1 (351 aa).

An N5-methylglutamine modification is found at Gln229.

This sequence belongs to the prokaryotic/mitochondrial release factor family. In terms of processing, methylated by PrmC. Methylation increases the termination efficiency of RF1.

It localises to the cytoplasm. Functionally, peptide chain release factor 1 directs the termination of translation in response to the peptide chain termination codons UAG and UAA. In Ruegeria pomeroyi (strain ATCC 700808 / DSM 15171 / DSS-3) (Silicibacter pomeroyi), this protein is Peptide chain release factor 1.